Consider the following 92-residue polypeptide: Small ribosomal subunit protein uS19c (92 aa).

Belongs to the universal ribosomal protein uS19 family.

It localises to the plastid. Its subcellular location is the chloroplast. Its function is as follows. Protein S19 forms a complex with S13 that binds strongly to the 16S ribosomal RNA. The sequence is that of Small ribosomal subunit protein uS19c from Calycanthus floridus var. glaucus (Eastern sweetshrub).